The following is a 347-amino-acid chain: Heme A synthase (347 aa).

8 consecutive transmembrane segments (helical) span residues 17–37 (LANWLLLVAVLVFAIVVVGGI), 106–126 (GIGAVLAGVMIVAWWKRAIPA), 132–152 (MIGIFALGGLQGAIGWWMVYS), 165–185 (LATHLIAALLIFSALVWTVLD), 202–222 (ALAIAAVLILAVQIMLGAFVA), 260–280 (IVVQFVHRWWAWAAAIAALAV), 295–315 (AVATLIVVQIALGIATLLTGV), and 317–337 (IAVAVAHQAVAVLLLAALLWA). H266 is a heme binding site. H323 contributes to the heme binding site.

It belongs to the COX15/CtaA family. Type 2 subfamily. In terms of assembly, interacts with CtaB. Heme b is required as a cofactor.

The protein localises to the cell membrane. It catalyses the reaction Fe(II)-heme o + 2 A + H2O = Fe(II)-heme a + 2 AH2. It functions in the pathway porphyrin-containing compound metabolism; heme A biosynthesis; heme A from heme O: step 1/1. Functionally, catalyzes the conversion of heme O to heme A by two successive hydroxylations of the methyl group at C8. The first hydroxylation forms heme I, the second hydroxylation results in an unstable dihydroxymethyl group, which spontaneously dehydrates, resulting in the formyl group of heme A. The protein is Heme A synthase of Rhizorhabdus wittichii (strain DSM 6014 / CCUG 31198 / JCM 15750 / NBRC 105917 / EY 4224 / RW1) (Sphingomonas wittichii).